The following is a 430-amino-acid chain: MTRSYEKSKQAYAEAVQLMPGGVNSPVRAFKSVNMDPIFMESGHGAIIKDIDGNEYIDYVLSWGPLILGHTHPEVVKAIAETAAKGSSFGAPTYTENRLAQLVLDRLPGMEMIRFVSSGTEATMSALRVARGVTGRDKILKFEGSYHGHGDSLLIKAGSGVATLGLPDSPGVPADVARNTLTVAYNDLEGAKAVFEKFGAELAAVIVEPVAGNMGVVPPQSGFLEGLRELTSTHGSLLIFDEVMTGFRVDYGCAQGYFGVTPDITTLGKVIGGGLPVGAFAGTKKIMEQVAPAGPIYQAGTLSGNPLAMTAGYETLSRLDRSTYEHFKQLGDQLEAGFREAATKYNIPHTVNRAGSMIGFFFTNEEVIDFATAKSSDLALFAEYFRLMAEEGIFLPPSQFEGLFISTAHTEEHIAKTVAAFHKVFAQLAK.

N6-(pyridoxal phosphate)lysine is present on Lys269.

It belongs to the class-III pyridoxal-phosphate-dependent aminotransferase family. HemL subfamily. As to quaternary structure, homodimer. The cofactor is pyridoxal 5'-phosphate.

It localises to the cytoplasm. It carries out the reaction (S)-4-amino-5-oxopentanoate = 5-aminolevulinate. Its pathway is porphyrin-containing compound metabolism; protoporphyrin-IX biosynthesis; 5-aminolevulinate from L-glutamyl-tRNA(Glu): step 2/2. In Lysinibacillus sphaericus (strain C3-41), this protein is Glutamate-1-semialdehyde 2,1-aminomutase 2.